The following is a 348-amino-acid chain: Rhodopsin (348 aa).

At methionine 1 the chain carries N-acetylmethionine. Topologically, residues 1-36 (MNGTEGPNFYVPFSNKTGVVRSPFEEPQYYLAEPWQ) are extracellular. N-linked (GlcNAc...) asparagine glycosylation is found at asparagine 2 and asparagine 15. The chain crosses the membrane as a helical span at residues 37 to 61 (FSCLAAYMFMLIVLGFPINFLTLYV). The Cytoplasmic segment spans residues 62–73 (TIQHKKLRTPLN). Residues 74 to 96 (YILLNLAIADLFMVFGGFTTTLY) form a helical membrane-spanning segment. The Extracellular portion of the chain corresponds to 97-110 (TSLHGYFVFGPTGC). Cysteine 110 and cysteine 187 form a disulfide bridge. Residues 111–133 (DLEGFFATLGGEIALWSLVVLAI) traverse the membrane as a helical segment. The 'Ionic lock' involved in activated form stabilization motif lies at 134-136 (ERY). Residues 134-152 (ERYIVVCKPMSNFRFGENH) are Cytoplasmic-facing. Residues 153-173 (AIMGVAFTWVMALACAAPPLV) traverse the membrane as a helical segment. Residues 174-202 (GWSRYIPEGMQCSCGIDYYTLKPEVNNES) lie on the Extracellular side of the membrane. Glutamate 201 lines the Zn(2+) pocket. The chain crosses the membrane as a helical span at residues 203-224 (FVIYMFVVHFTIPMVVIFFCYG). Residues 225-252 (QLVFTVKEAAAQQQESATTQKAEKEVTR) are Cytoplasmic-facing. The helical transmembrane segment at 253 to 274 (MVIIMVIAFLICWLPYAGVAFY) threads the bilayer. Residues 275 to 286 (IFTHQGSNFGPI) are Extracellular-facing. A Zn(2+)-binding site is contributed by glutamine 279. A helical membrane pass occupies residues 287–308 (LMTLPAFFAKTSAVYNPVIYIM). N6-(retinylidene)lysine is present on lysine 296. Topologically, residues 309-348 (LNKQFRTCMLTTLCCGKIPLGDDEASATASKTETSQVAPA) are cytoplasmic. S-palmitoyl cysteine attachment occurs at residues cysteine 322 and cysteine 323. An interaction with SAG region spans residues 330 to 348 (DDEASATASKTETSQVAPA). Serine 334 is modified (phosphoserine). Residue threonine 336 is modified to Phosphothreonine. A Phosphoserine modification is found at serine 338. Phosphothreonine is present on residues threonine 340 and threonine 342. The residue at position 343 (serine 343) is a Phosphoserine.

The protein belongs to the G-protein coupled receptor 1 family. Opsin subfamily. Homodimer. May form a complex composed of RHO, GRK1 and RCVRN in a Ca(2+)-dependent manner; RCVRN prevents the interaction between GRK1 and RHO. Interacts with GRK1. Interacts (phosphorylated form) with SAG. Interacts with GNAT1. Interacts with GNAT3. SAG and G-proteins compete for a common binding site. Interacts with PRCD; the interaction promotes PRCD stability. Forms a complex with ASAP1 and ARF4. Forms a complex with ASAP1, RAB11A, Rabin8/RAB3IP, ARF4 and RAB11FIP3; the complex regulates Golgi-to-cilia rhodopsin/RHO transport in photoreceptors. In terms of processing, phosphorylated on some or all of the serine and threonine residues present in the C-terminal region. Contains one covalently linked retinal chromophore. Upon light absorption, the covalently bound 11-cis-retinal is converted to all-trans-retinal. After hydrolysis of the Schiff base and release of the covalently bound all-trans-retinal, active rhodopsin is regenerated by binding of a fresh molecule of 11-cis-retinal.

The protein resides in the membrane. It is found in the cell projection. The protein localises to the cilium. It localises to the photoreceptor outer segment. In terms of biological role, photoreceptor required for image-forming vision at low light intensity. Required for photoreceptor cell viability after birth. Light-induced isomerization of 11-cis to all-trans retinal triggers a conformational change that activates signaling via G-proteins. Subsequent receptor phosphorylation mediates displacement of the bound G-protein alpha subunit by the arrestin SAG and terminates signaling. The sequence is that of Rhodopsin (RHO) from Caluromys philander (Bare-tailed woolly opossum).